Reading from the N-terminus, the 210-residue chain is ATP-dependent Clp protease proteolytic subunit (210 aa).

Catalysis depends on serine 114, which acts as the Nucleophile. Residue histidine 139 is part of the active site.

The protein belongs to the peptidase S14 family. As to quaternary structure, fourteen ClpP subunits assemble into 2 heptameric rings which stack back to back to give a disk-like structure with a central cavity, resembling the structure of eukaryotic proteasomes.

It localises to the cytoplasm. The enzyme catalyses Hydrolysis of proteins to small peptides in the presence of ATP and magnesium. alpha-casein is the usual test substrate. In the absence of ATP, only oligopeptides shorter than five residues are hydrolyzed (such as succinyl-Leu-Tyr-|-NHMec, and Leu-Tyr-Leu-|-Tyr-Trp, in which cleavage of the -Tyr-|-Leu- and -Tyr-|-Trp bonds also occurs).. In terms of biological role, cleaves peptides in various proteins in a process that requires ATP hydrolysis. Has a chymotrypsin-like activity. Plays a major role in the degradation of misfolded proteins. In Janthinobacterium sp. (strain Marseille) (Minibacterium massiliensis), this protein is ATP-dependent Clp protease proteolytic subunit.